The primary structure comprises 598 residues: Probable polysaccharide biosynthesis protein EpsC (598 aa).

The next 4 membrane-spanning stretches (helical) occupy residues 1-21 (MIIALDTYLVLNSVIAGYQFL), 31-51 (GALLLTAVSLLLSYHVCAFLF), 63-83 (LGELIVLLKGITLSAAVTGVI), and 87-107 (VYHTMFFRLLTACWVLQLLSI).

The protein belongs to the polysaccharide synthase family.

It localises to the cell membrane. Functionally, involved in biofilm formation. This chain is Probable polysaccharide biosynthesis protein EpsC (epsC), found in Bacillus subtilis (strain 168).